A 108-amino-acid chain; its full sequence is Structural protein 1 (108 aa).

The tract at residues 1–20 is disordered; that stretch reads MSRVSEYGVPEGVRESDSDT. Residues 1-77 lie on the Intravirion side of the membrane; sequence MSRVSEYGVP…LKMQMDRLCN (77 aa). Residues 78–98 traverse the membrane as a helical; Signal-anchor for type II membrane protein segment; it reads VLGVVLQMATLALVTYIAFVV. The Virion surface portion of the chain corresponds to 99–108; it reads HTRATSCKRE.

The protein belongs to the varicellovirus ORF1 protein family. As to quaternary structure, homodimer. In terms of processing, phosphorylated.

The protein localises to the virion membrane. It localises to the host Golgi apparatus membrane. The protein is Structural protein 1 of Varicella-zoster virus (strain Dumas) (HHV-3).